The primary structure comprises 407 residues: Imidazolonepropionase (407 aa).

His-74 and His-76 together coordinate Fe(3+). Zn(2+)-binding residues include His-74 and His-76. 4-imidazolone-5-propanoate-binding residues include Arg-83, Tyr-146, and His-179. N-formimidoyl-L-glutamate is bound at residue Tyr-146. Position 244 (His-244) interacts with Fe(3+). His-244 contacts Zn(2+). Gln-247 lines the 4-imidazolone-5-propanoate pocket. Asp-319 serves as a coordination point for Fe(3+). Residue Asp-319 participates in Zn(2+) binding. Asn-321 and Gly-323 together coordinate N-formimidoyl-L-glutamate. Residue Thr-324 participates in 4-imidazolone-5-propanoate binding.

It belongs to the metallo-dependent hydrolases superfamily. HutI family. Zn(2+) is required as a cofactor. It depends on Fe(3+) as a cofactor.

Its subcellular location is the cytoplasm. The catalysed reaction is 4-imidazolone-5-propanoate + H2O = N-formimidoyl-L-glutamate. Its pathway is amino-acid degradation; L-histidine degradation into L-glutamate; N-formimidoyl-L-glutamate from L-histidine: step 3/3. Functionally, catalyzes the hydrolytic cleavage of the carbon-nitrogen bond in imidazolone-5-propanoate to yield N-formimidoyl-L-glutamate. It is the third step in the universal histidine degradation pathway. The chain is Imidazolonepropionase from Salmonella paratyphi A (strain ATCC 9150 / SARB42).